Here is a 156-residue protein sequence, read N- to C-terminus: MIQTQATRTARQELTEVIILAKARKDLSFAQIVDGTGLSEAFVTAALLGQHPLPESAAKVVGDKLDLDADQVALLQSMPVRGSFFDGVPSDPTIYRFYEMMSVYGTTLKALVHEKFGDGIISAINFKLDIKKVEDPDGGHRAVITLDGKYLPTKPF.

Catalysis depends on residues Arg96, Glu99, and Ser122.

This sequence belongs to the cyanase family.

It catalyses the reaction cyanate + hydrogencarbonate + 3 H(+) = NH4(+) + 2 CO2. Functionally, catalyzes the reaction of cyanate with bicarbonate to produce ammonia and carbon dioxide. This Pseudomonas putida (strain W619) protein is Cyanate hydratase.